Here is a 399-residue protein sequence, read N- to C-terminus: Immunoglobulin heavy constant gamma 1 (399 aa).

Residues 1–21 (ASTKGPSVFPLAPSSKSTSGG) are disordered. Residues 1–98 (ASTKGPSVFP…PSNTKVDKKV (98 aa)) form a CH1 region. The Extracellular segment spans residues 1-350 (ASTKGPSVFP…DGELDGLWTT (350 aa)). 3 Ig-like domains span residues 6-99 (PSVF…KKVE), 121-220 (PSVF…KTIS), and 229-325 (PQVY…KSLS). C27 and C83 are joined by a disulfide. A hinge region spans residues 99–110 (EPKSCDKTHTCP). The segment at 111–223 (PCPAPELLGG…PIEKTISKAK (113 aa)) is CH2. Intrachain disulfides connect C144-C204 and C250-C308. N180 carries an N-linked (GlcNAc...) (complex) asparagine glycan. The segment at 224 to 330 (GQPREPQVYT…QKSLSLSPEL (107 aa)) is CH3. The helical transmembrane segment at 351–371 (ITIFITLFLLSVCYSATVTFF) threads the bilayer. At 372–399 (KVKWIFSSVVDLKQTIIPDYRNMIGQGA) the chain is on the cytoplasmic side.

In terms of assembly, immunoglobulins are composed of two identical heavy chains and two identical light chains; disulfide-linked. Interacts with FCGR1A; this interaction mediates IgG effector functions on monocytes. Interacts with FCGR2A and FCGR3A. Glycosylation on Asn-180 is required for interaction with Fc receptors and ability to activate the complement pathway. Post-translationally, (Microbial infection) Deglycosylation on Asn-180 by S.pyogenes EndoS or Endos2 endoglucosidases prevents interaction between immunoglobulin-gamma (IgG) and Fc receptors, impairing ability to activate the complement pathway.

Its subcellular location is the secreted. The protein resides in the cell membrane. Functionally, constant region of immunoglobulin heavy chains. Immunoglobulins, also known as antibodies, are membrane-bound or secreted glycoproteins produced by B lymphocytes. In the recognition phase of humoral immunity, the membrane-bound immunoglobulins serve as receptors which, upon binding of a specific antigen, trigger the clonal expansion and differentiation of B lymphocytes into immunoglobulins-secreting plasma cells. Secreted immunoglobulins mediate the effector phase of humoral immunity, which results in the elimination of bound antigens. The antigen binding site is formed by the variable domain of one heavy chain, together with that of its associated light chain. Thus, each immunoglobulin has two antigen binding sites with remarkable affinity for a particular antigen. The variable domains are assembled by a process called V-(D)-J rearrangement and can then be subjected to somatic hypermutations which, after exposure to antigen and selection, allow affinity maturation for a particular antigen. Mediates IgG effector functions on monocytes triggering ADCC of virus-infected cells. In Homo sapiens (Human), this protein is Immunoglobulin heavy constant gamma 1.